The chain runs to 424 residues: GTPase Obg (424 aa).

The Obg domain maps to 1–158 (MFIDTAKIFV…RWIKLELKLL (158 aa)). The OBG-type G domain maps to 159–331 (ADVGLIGFPN…LMKEAARLLS (173 aa)). GTP is bound by residues 165-172 (GFPNVGKS), 190-194 (FTTLK), 212-215 (DIPG), 282-285 (NKSD), and 312-314 (SAA). 2 residues coordinate Mg(2+): serine 172 and threonine 192. The 80-residue stretch at 345–424 (RFIEEEKRFT…LNDFEFDFLL (80 aa)) folds into the OCT domain.

It belongs to the TRAFAC class OBG-HflX-like GTPase superfamily. OBG GTPase family. In terms of assembly, monomer. Mg(2+) serves as cofactor.

It localises to the cytoplasm. Its function is as follows. An essential GTPase which binds GTP, GDP and possibly (p)ppGpp with moderate affinity, with high nucleotide exchange rates and a fairly low GTP hydrolysis rate. Plays a role in control of the cell cycle, stress response, ribosome biogenesis and in those bacteria that undergo differentiation, in morphogenesis control. The chain is GTPase Obg from Clostridium botulinum (strain ATCC 19397 / Type A).